The following is a 181-amino-acid chain: ATP synthase subunit b, chloroplastic (181 aa).

The chain crosses the membrane as a helical span at residues 31-50 (NVLNIAILLSGVVYLGRNFL).

This sequence belongs to the ATPase B chain family. F-type ATPases have 2 components, F(1) - the catalytic core - and F(0) - the membrane proton channel. F(1) has five subunits: alpha(3), beta(3), gamma(1), delta(1), epsilon(1). F(0) has four main subunits: a(1), b(1), b'(1) and c(10-14). The alpha and beta chains form an alternating ring which encloses part of the gamma chain. F(1) is attached to F(0) by a central stalk formed by the gamma and epsilon chains, while a peripheral stalk is formed by the delta, b and b' chains.

The protein localises to the plastid. Its subcellular location is the chloroplast thylakoid membrane. In terms of biological role, f(1)F(0) ATP synthase produces ATP from ADP in the presence of a proton or sodium gradient. F-type ATPases consist of two structural domains, F(1) containing the extramembraneous catalytic core and F(0) containing the membrane proton channel, linked together by a central stalk and a peripheral stalk. During catalysis, ATP synthesis in the catalytic domain of F(1) is coupled via a rotary mechanism of the central stalk subunits to proton translocation. Functionally, component of the F(0) channel, it forms part of the peripheral stalk, linking F(1) to F(0). This is ATP synthase subunit b, chloroplastic from Rhodomonas salina (Cryptomonas salina).